The sequence spans 956 residues: Endogenous retrovirus group K member 6 Pol protein (956 aa).

The 189-residue stretch at Leu57 to Ile245 folds into the Reverse transcriptase domain. The LPQG motif lies at Leu161–Gly164. The YXDD signature appears at Cys195–Asp198. Positions Leu460–Ile590 constitute an RNase H type-1 domain. The Mg(2+) site is built by Asp469, Glu497, Asp517, and Asp582. The Integrase-type zinc-finger motif lies at Ser587–Gln628. Zn(2+) contacts are provided by His596, His600, Cys624, and Cys627. In terms of domain architecture, Integrase catalytic spans Arg642–Lys803. The integrase-type DNA-binding region spans Lys811–Glu859. The disordered stretch occupies residues Lys865–Val890. Over residues Ser869–Thr879 the composition is skewed to low complexity.

Belongs to the beta type-B retroviral polymerase family. HERV class-II K(HML-2) pol subfamily. In terms of processing, cleavage sites that yield the mature proteins remain to be determined.

It carries out the reaction DNA(n) + a 2'-deoxyribonucleoside 5'-triphosphate = DNA(n+1) + diphosphate. It catalyses the reaction Endonucleolytic cleavage to 5'-phosphomonoester.. Functionally, early post-infection, the reverse transcriptase converts the viral RNA genome into double-stranded viral DNA. The RNase H domain of the reverse transcriptase performs two functions. It degrades the RNA template and specifically removes the RNA primer from the RNA/DNA hybrid. Following nuclear import, the integrase catalyzes the insertion of the linear, double-stranded viral DNA into the host cell chromosome. Endogenous Pol proteins may have kept, lost or modified their original function during evolution. This Homo sapiens (Human) protein is Endogenous retrovirus group K member 6 Pol protein (ERVK-6).